We begin with the raw amino-acid sequence, 131 residues long: Small ribosomal subunit protein uS8 (131 aa).

Belongs to the universal ribosomal protein uS8 family. Part of the 30S ribosomal subunit. Contacts proteins S5 and S12.

Its function is as follows. One of the primary rRNA binding proteins, it binds directly to 16S rRNA central domain where it helps coordinate assembly of the platform of the 30S subunit. The sequence is that of Small ribosomal subunit protein uS8 from Malacoplasma penetrans (strain HF-2) (Mycoplasma penetrans).